The following is a 202-amino-acid chain: Acireductone dioxygenase (202 aa).

Positions 110, 112, 116, and 154 each coordinate Fe(2+). Ni(2+) contacts are provided by H110, H112, E116, and H154.

This sequence belongs to the acireductone dioxygenase (ARD) family. Monomer. It depends on Fe(2+) as a cofactor. The cofactor is Ni(2+).

The catalysed reaction is 1,2-dihydroxy-5-(methylsulfanyl)pent-1-en-3-one + O2 = 3-(methylsulfanyl)propanoate + CO + formate + 2 H(+). It catalyses the reaction 1,2-dihydroxy-5-(methylsulfanyl)pent-1-en-3-one + O2 = 4-methylsulfanyl-2-oxobutanoate + formate + 2 H(+). Its pathway is amino-acid biosynthesis; L-methionine biosynthesis via salvage pathway; L-methionine from S-methyl-5-thio-alpha-D-ribose 1-phosphate: step 5/6. Functionally, catalyzes 2 different reactions between oxygen and the acireductone 1,2-dihydroxy-3-keto-5-methylthiopentene (DHK-MTPene) depending upon the metal bound in the active site. Fe-containing acireductone dioxygenase (Fe-ARD) produces formate and 2-keto-4-methylthiobutyrate (KMTB), the alpha-ketoacid precursor of methionine in the methionine recycle pathway. Ni-containing acireductone dioxygenase (Ni-ARD) produces methylthiopropionate, carbon monoxide and formate, and does not lie on the methionine recycle pathway. The polypeptide is Acireductone dioxygenase (Synechococcus sp. (strain CC9311)).